The chain runs to 965 residues: MNEEDTDFAWLHNNSAEHLRFLSHRIFIGPIPSNFIHSTSGFFNKRFQNYTKRQICYNVASPNEPPIDFSFLMHKSTDENPDTPSNLDSPSTQNVGSTNNTRASQSLLRRSSSFFRRRHRKNGTHASTDNNPFSESSTLQPQTAERTSQQAVRSAITETTNPSVSVQNSNSTSTSSAAMIIPHRDSQNSLEIAPLISPESQLSSLHPSSSRRHLISTPHVNRGTQFKRSSSCRNSRQPLLSGVDKHLTSNFTDANLIIKQSVVLARIESTFTVLPSDYNDSAAQRVPRKTISPWSQCLLVARQTDVENSIRLDFISKKLRKRLNGDVVHNLDVPHDKSYKSNYLFSVVLSPHQASWNIYNSFDNSMVLWCPYGKNKTLICLLNFQSSLLSFEWISIISRALLFSPRPSLLISVPAFHIHLRLNFPCFKDTTRPHTNETFVTTDDITQLSRTSTLSLSTASPRLVHDLVMKSWDISEDQFVESCLGVLEVNPEWSGIVKTWSKSHTLGLCWRMYDRLEWINSFSSLKYVGLLAAKDLYQLELRPKLHYPNHVTFRDGSKMDEPTPVEGYLIRLTSSTGRKTRYGRMFHKELYFAIFNNFLFAIQPDSVLPLSMLSKSLNLDDKLPFLSNNENDKYVYEFDPFKIANCRASGLNETIDSSVRESFLLLLQAERKRELDMLTIADSFLDLSRVESVCPVEDVEERNIFEITMTNGMKLVFQSYCERTRNLWINKITEVASYWKQRLFLDLQEYHDVRETNINILHIEQSIEPDVACYLNHWEVAGCVASTLIYHYCSMLGCRVIRMQGTLFKKKDALFEKCFAILIPGQLVFFQDATRTKFGKLCTKTHYRKRYSISLKNAFIYTGLSTMDEFARGPNDPQPHISRLPRCYEDGWQSFDRDDMLSFVIWSSGGVDYDLRPHHSVPDTAYGMAKDKLSKPKRFMFLARTRQERDVWAKRISKEINRGHS.

A disordered region spans residues 70-175; sequence SFLMHKSTDE…VQNSNSTSTS (106 aa). A compositionally biased stretch (polar residues) spans 82–101; it reads DTPSNLDSPSTQNVGSTNNT. Over residues 102–114 the composition is skewed to low complexity; the sequence is RASQSLLRRSSSF. Over residues 124–158 the composition is skewed to polar residues; sequence THASTDNNPFSESSTLQPQTAERTSQQAVRSAITE. Low complexity predominate over residues 159–175; the sequence is TTNPSVSVQNSNSTSTS. PH domains are found at residues 562 to 737 and 800 to 961; these read PTPV…EVAS and VIRM…KEIN.

The protein belongs to the SPO71 family.

It localises to the cytoplasm. It is found in the nucleus. The protein resides in the prospore membrane. Its function is as follows. May recruit a lipid transfer protein to the forespore membrane during sporulation, thereby aiding forespore membrane formation. Required for meiosis. The protein is Forespore membrane adapter protein MUG56 of Schizosaccharomyces pombe (strain 972 / ATCC 24843) (Fission yeast).